A 580-amino-acid chain; its full sequence is MGGLEKKKYERGSATNYITRNKARKKLQLSLPDFRRLCILKGIYPHEPKHKKKVNKGSTAPRTFYLLKDIKFLLHEPIVGKFREYKVFVRRLRKAYGKREWDAVDRIRDNKPAYKLDHIIKERYPTFIDAVRDLDDALSMCFLFSTFPRTGKCHVQTIQLCRRLSVEFLNYVIASRSLRKVFLSIKGIYYQADILGQTVTWITPYAFSHDHPTDVDYRVMATFTEFYTTLLGFVNFRLYQTLNLQYPPKLDYFSEADLKSDNEDKYALETEAYMEKLAALSASLSRVIPSEPEEENEVDEFPADPENAGQEEEQKKQLQEEEKHKSMFVGLKFFLNREVPRDALAFIIRSFGGEVSWDASVCIGATYNSANPSITHHIVDRPSIQTQIINRYYLQPQWVFDCVNARMLLPVEDYFPGVLLPPHLSPFVQEKEGDYIPPEKLRLMALQKGENPEDDDDDDEEDDEDEEEDDEDEDDEENEEEEEDKKLRHLENKKVGQNKLNVRITAGKVKVEDRTQAAEQEKTEEKRLAIMMMKKKEKYLYNKIMFGKKRKVREANKLALKRKAHDESVKVERKKKAKKH.

Positions 291-303 are enriched in acidic residues; that stretch reads EPEEENEVDEFPA. The segment at 291–321 is disordered; sequence EPEEENEVDEFPADPENAGQEEEQKKQLQEE. Positions 312-321 are enriched in basic and acidic residues; sequence EEQKKQLQEE. The BRCT domain occupies 323–416; sequence KHKSMFVGLK…MLLPVEDYFP (94 aa). Positions 448 to 496 are disordered; the sequence is KGENPEDDDDDDEEDDEDEEEDDEDEDDEENEEEEEDKKLRHLENKKVG. Positions 452 to 483 are enriched in acidic residues; it reads PEDDDDDDEEDDEDEEEDDEDEDDEENEEEEE. Over residues 484–494 the composition is skewed to basic and acidic residues; that stretch reads DKKLRHLENKK.

This sequence belongs to the pescadillo family. As to quaternary structure, component of the PeBoW complex, composed of bop1, pes1 and wdr12. The complex is held together by bop1, which interacts with pes1 via its N-terminal domain and with wdr12 via a high-affinity interaction between the seven-bladed beta-propeller domains of the 2 proteins. The PeBoW complex associates with the 66S pre-ribosome.

The protein localises to the nucleus. It is found in the nucleolus. The protein resides in the nucleoplasm. In terms of biological role, component of the PeBoW complex, which is required for maturation of 28S and 5.8S ribosomal RNAs and formation of the 60S ribosome. The protein is Pescadillo homolog (pes1) of Xenopus tropicalis (Western clawed frog).